The sequence spans 275 residues: 3-methyl-2-oxobutanoate hydroxymethyltransferase (275 aa).

Residues Asp-44 and Asp-83 each contribute to the Mg(2+) site. 3-methyl-2-oxobutanoate-binding positions include 44-45 (DS), Asp-83, and Lys-113. Glu-115 serves as a coordination point for Mg(2+). Glu-182 serves as the catalytic Proton acceptor.

The protein belongs to the PanB family. In terms of assembly, homodecamer; pentamer of dimers. Requires Mg(2+) as cofactor.

It is found in the cytoplasm. The enzyme catalyses 3-methyl-2-oxobutanoate + (6R)-5,10-methylene-5,6,7,8-tetrahydrofolate + H2O = 2-dehydropantoate + (6S)-5,6,7,8-tetrahydrofolate. Its pathway is cofactor biosynthesis; (R)-pantothenate biosynthesis; (R)-pantoate from 3-methyl-2-oxobutanoate: step 1/2. Functionally, catalyzes the reversible reaction in which hydroxymethyl group from 5,10-methylenetetrahydrofolate is transferred onto alpha-ketoisovalerate to form ketopantoate. This Clostridioides difficile (strain 630) (Peptoclostridium difficile) protein is 3-methyl-2-oxobutanoate hydroxymethyltransferase.